The sequence spans 242 residues: ATP-dependent dethiobiotin synthetase BioD (242 aa).

12 to 17 is an ATP binding site; that stretch reads EVGKTV. Thr16 provides a ligand contact to Mg(2+). Residue Lys37 is part of the active site. Position 41 (Ser41) interacts with substrate. Residues Asp51 and 112–115 contribute to the ATP site; that span reads EGAG. Asp51 and Glu112 together coordinate Mg(2+).

The protein belongs to the dethiobiotin synthetase family. As to quaternary structure, homodimer. Mg(2+) is required as a cofactor.

Its subcellular location is the cytoplasm. It catalyses the reaction (7R,8S)-7,8-diammoniononanoate + CO2 + ATP = (4R,5S)-dethiobiotin + ADP + phosphate + 3 H(+). Its pathway is cofactor biosynthesis; biotin biosynthesis; biotin from 7,8-diaminononanoate: step 1/2. In terms of biological role, catalyzes a mechanistically unusual reaction, the ATP-dependent insertion of CO2 between the N7 and N8 nitrogen atoms of 7,8-diaminopelargonic acid (DAPA, also called 7,8-diammoniononanoate) to form a ureido ring. The protein is ATP-dependent dethiobiotin synthetase BioD of Bacillus cereus (strain B4264).